Reading from the N-terminus, the 435-residue chain is Enolase (435 aa).

Gln-163 is a (2R)-2-phosphoglycerate binding site. Catalysis depends on Glu-205, which acts as the Proton donor. Residues Asp-243, Glu-292, and Asp-319 each coordinate Mg(2+). Residues Lys-344, Arg-373, Ser-374, and Lys-395 each contribute to the (2R)-2-phosphoglycerate site. Lys-344 functions as the Proton acceptor in the catalytic mechanism.

Belongs to the enolase family. Mg(2+) serves as cofactor.

It is found in the cytoplasm. The protein resides in the secreted. Its subcellular location is the cell surface. It catalyses the reaction (2R)-2-phosphoglycerate = phosphoenolpyruvate + H2O. The protein operates within carbohydrate degradation; glycolysis; pyruvate from D-glyceraldehyde 3-phosphate: step 4/5. In terms of biological role, catalyzes the reversible conversion of 2-phosphoglycerate (2-PG) into phosphoenolpyruvate (PEP). It is essential for the degradation of carbohydrates via glycolysis. This Streptococcus pyogenes serotype M12 (strain MGAS2096) protein is Enolase.